A 371-amino-acid chain; its full sequence is 4-hydroxy-3-methylbut-2-en-1-yl diphosphate synthase (flavodoxin) (371 aa).

The [4Fe-4S] cluster site is built by Cys270, Cys273, Cys305, and Glu312.

Belongs to the IspG family. Requires [4Fe-4S] cluster as cofactor.

The catalysed reaction is (2E)-4-hydroxy-3-methylbut-2-enyl diphosphate + oxidized [flavodoxin] + H2O + 2 H(+) = 2-C-methyl-D-erythritol 2,4-cyclic diphosphate + reduced [flavodoxin]. It participates in isoprenoid biosynthesis; isopentenyl diphosphate biosynthesis via DXP pathway; isopentenyl diphosphate from 1-deoxy-D-xylulose 5-phosphate: step 5/6. Its function is as follows. Converts 2C-methyl-D-erythritol 2,4-cyclodiphosphate (ME-2,4cPP) into 1-hydroxy-2-methyl-2-(E)-butenyl 4-diphosphate. The sequence is that of 4-hydroxy-3-methylbut-2-en-1-yl diphosphate synthase (flavodoxin) from Chromohalobacter salexigens (strain ATCC BAA-138 / DSM 3043 / CIP 106854 / NCIMB 13768 / 1H11).